We begin with the raw amino-acid sequence, 281 residues long: MDKETQMMLVPQGSIEGYIRAANEYPMLTAEEEKELAERLYYHEDLDAAKKLILSHLRFVIHVARGYSGYGLPQADLIQEGNIGLMKAVKRFNPEVGVRLVSFAVHWIKAEIHEYVLRNWRIVKVATTKAQRKLFFNLRKTKQRLGWFNENEVDMVANELGVSKEDVIEMESRMSGADVGFDLPTDDAETETYSPALYLEDKSSNFAAELENENFESQATEQLGAALQSLDARSQDIIKARWLDDNKATLHDLAAKYNVSAERIRQLETNALKKLKSAVNF.

Residues 52-121 are sigma-70 factor domain-2; sequence LILSHLRFVI…IHEYVLRNWR (70 aa). An Interaction with polymerase core subunit RpoC motif is present at residues 76–79; that stretch reads DLIQ. Positions 226–277 are sigma-70 factor domain-4; it reads ALQSLDARSQDIIKARWLDDNKATLHDLAAKYNVSAERIRQLETNALKKLKS. Positions 250-269 form a DNA-binding region, H-T-H motif; the sequence is LHDLAAKYNVSAERIRQLET.

It belongs to the sigma-70 factor family. RpoH subfamily. Interacts with the RNA polymerase core enzyme.

The protein localises to the cytoplasm. Its function is as follows. Sigma factors are initiation factors that promote the attachment of RNA polymerase to specific initiation sites and are then released. This sigma factor is involved in regulation of expression of heat shock genes. In Haemophilus influenzae (strain ATCC 51907 / DSM 11121 / KW20 / Rd), this protein is RNA polymerase sigma factor RpoH.